Here is a 372-residue protein sequence, read N- to C-terminus: Aminomethyltransferase (372 aa).

It belongs to the GcvT family. As to quaternary structure, the glycine cleavage system is composed of four proteins: P, T, L and H.

It carries out the reaction N(6)-[(R)-S(8)-aminomethyldihydrolipoyl]-L-lysyl-[protein] + (6S)-5,6,7,8-tetrahydrofolate = N(6)-[(R)-dihydrolipoyl]-L-lysyl-[protein] + (6R)-5,10-methylene-5,6,7,8-tetrahydrofolate + NH4(+). The glycine cleavage system catalyzes the degradation of glycine. This Prochlorococcus marinus (strain NATL2A) protein is Aminomethyltransferase.